We begin with the raw amino-acid sequence, 217 residues long: tRNA (guanine-N(7)-)-methyltransferase (217 aa).

The S-adenosyl-L-methionine site is built by Glu-44, Glu-69, Asp-96, and Asp-118. The active site involves Asp-118. Lys-122 lines the substrate pocket. The interval 124–129 (RHEKRR) is interaction with RNA. Residues Asp-154 and 191–194 (TEYE) contribute to the substrate site.

The protein belongs to the class I-like SAM-binding methyltransferase superfamily. TrmB family.

It catalyses the reaction guanosine(46) in tRNA + S-adenosyl-L-methionine = N(7)-methylguanosine(46) in tRNA + S-adenosyl-L-homocysteine. Its pathway is tRNA modification; N(7)-methylguanine-tRNA biosynthesis. Its function is as follows. Catalyzes the formation of N(7)-methylguanine at position 46 (m7G46) in tRNA. This is tRNA (guanine-N(7)-)-methyltransferase from Bacillus velezensis (strain DSM 23117 / BGSC 10A6 / LMG 26770 / FZB42) (Bacillus amyloliquefaciens subsp. plantarum).